The primary structure comprises 382 residues: Dual-specificity RNA methyltransferase RlmN (382 aa).

Glu-91 acts as the Proton acceptor in catalysis. The region spanning 97-339 (ETDRGTLCIS…TTVRKTRGDD (243 aa)) is the Radical SAM core domain. Residues Cys-104 and Cys-344 are joined by a disulfide bond. The [4Fe-4S] cluster site is built by Cys-111, Cys-115, and Cys-118. S-adenosyl-L-methionine-binding positions include 165 to 166 (GE), Ser-197, 219 to 221 (SLH), and Asn-301. The S-methylcysteine intermediate role is filled by Cys-344.

The protein belongs to the radical SAM superfamily. RlmN family. It depends on [4Fe-4S] cluster as a cofactor.

It localises to the cytoplasm. The enzyme catalyses adenosine(2503) in 23S rRNA + 2 reduced [2Fe-2S]-[ferredoxin] + 2 S-adenosyl-L-methionine = 2-methyladenosine(2503) in 23S rRNA + 5'-deoxyadenosine + L-methionine + 2 oxidized [2Fe-2S]-[ferredoxin] + S-adenosyl-L-homocysteine. It catalyses the reaction adenosine(37) in tRNA + 2 reduced [2Fe-2S]-[ferredoxin] + 2 S-adenosyl-L-methionine = 2-methyladenosine(37) in tRNA + 5'-deoxyadenosine + L-methionine + 2 oxidized [2Fe-2S]-[ferredoxin] + S-adenosyl-L-homocysteine. Its function is as follows. Specifically methylates position 2 of adenine 2503 in 23S rRNA and position 2 of adenine 37 in tRNAs. m2A2503 modification seems to play a crucial role in the proofreading step occurring at the peptidyl transferase center and thus would serve to optimize ribosomal fidelity. The sequence is that of Dual-specificity RNA methyltransferase RlmN from Polaromonas sp. (strain JS666 / ATCC BAA-500).